Here is a 79-residue protein sequence, read N- to C-terminus: uncharacterized protein (79 aa).

An N-terminal signal peptide occupies residues 1–33; the sequence is MRFIIRTVMLIALVWIGLLLSGYGVLIGSKENA.

This is an uncharacterized protein from Escherichia coli O157:H7.